We begin with the raw amino-acid sequence, 209 residues long: Holliday junction branch migration complex subunit RuvA (209 aa).

The interval 1–70 is domain I; sequence MFSYLKGEAI…EDGTYLYGFA (70 aa). The domain II stretch occupies residues 71 to 149; sequence SAAARDLFRQ…QWRDQFSLPD (79 aa). Residues 149-153 form a flexible linker region; it reads DTAAQ. Residues 154 to 209 form a domain III region; it reads PNAAVHEDLELTLLALGYQETEIRGAIATLSQDSILLQNDNADEWIRRAITLLSQT.

It belongs to the RuvA family. As to quaternary structure, homotetramer. Forms an RuvA(8)-RuvB(12)-Holliday junction (HJ) complex. HJ DNA is sandwiched between 2 RuvA tetramers; dsDNA enters through RuvA and exits via RuvB. An RuvB hexamer assembles on each DNA strand where it exits the tetramer. Each RuvB hexamer is contacted by two RuvA subunits (via domain III) on 2 adjacent RuvB subunits; this complex drives branch migration. In the full resolvosome a probable DNA-RuvA(4)-RuvB(12)-RuvC(2) complex forms which resolves the HJ.

The protein resides in the cytoplasm. In terms of biological role, the RuvA-RuvB-RuvC complex processes Holliday junction (HJ) DNA during genetic recombination and DNA repair, while the RuvA-RuvB complex plays an important role in the rescue of blocked DNA replication forks via replication fork reversal (RFR). RuvA specifically binds to HJ cruciform DNA, conferring on it an open structure. The RuvB hexamer acts as an ATP-dependent pump, pulling dsDNA into and through the RuvAB complex. HJ branch migration allows RuvC to scan DNA until it finds its consensus sequence, where it cleaves and resolves the cruciform DNA. This Picosynechococcus sp. (strain ATCC 27264 / PCC 7002 / PR-6) (Agmenellum quadruplicatum) protein is Holliday junction branch migration complex subunit RuvA.